A 316-amino-acid chain; its full sequence is tRNA methyltransferase 10 homolog B (316 aa).

A coiled-coil region spans residues 73–97; the sequence is EKIVAAKKSKRKQEKERRKANRAEN. A disordered region spans residues 77-98; it reads AAKKSKRKQEKERRKANRAENP. The 198-residue stretch at 113–310 folds into the SAM-dependent MTase TRM10-type domain; sequence TKDKLLEAKH…KGVSSGKGYI (198 aa).

Belongs to the class IV-like SAM-binding methyltransferase superfamily. TRM10 family.

It catalyses the reaction guanosine(9) in tRNA + S-adenosyl-L-methionine = N(1)-methylguanosine(9) in tRNA + S-adenosyl-L-homocysteine + H(+). Functionally, S-adenosyl-L-methionine-dependent guanine N(1)-methyltransferase that catalyzes the formation of N(1)-methylguanine at position 9 (m1G9) in tRNAs. Probably not able to catalyze formation of N(1)-methyladenine at position 9 (m1A9) in tRNAs. In Homo sapiens (Human), this protein is tRNA methyltransferase 10 homolog B (TRMT10B).